The following is a 313-amino-acid chain: Formimidoylglutamase (313 aa).

His130, Asp155, His157, Asp159, Asp241, and Asp243 together coordinate Mn(2+).

This sequence belongs to the arginase family. Mn(2+) is required as a cofactor.

The catalysed reaction is N-formimidoyl-L-glutamate + H2O = formamide + L-glutamate. The protein operates within amino-acid degradation; L-histidine degradation into L-glutamate; L-glutamate from N-formimidoyl-L-glutamate (hydrolase route): step 1/1. Catalyzes the conversion of N-formimidoyl-L-glutamate to L-glutamate and formamide. This is Formimidoylglutamase from Salmonella paratyphi B (strain ATCC BAA-1250 / SPB7).